The sequence spans 227 residues: Ion-translocating oxidoreductase complex subunit E (227 aa).

The next 5 helical transmembrane spans lie at 34-56 (AINA…TIIS), 68-88 (IPIY…LLHA), 91-111 (FNLY…CIIV), 127-147 (FFDG…VGSI), and 181-201 (TIIL…LIAI).

This sequence belongs to the NqrDE/RnfAE family. The complex is composed of six subunits: RnfA, RnfB, RnfC, RnfD, RnfE and RnfG.

Its subcellular location is the cell inner membrane. Part of a membrane-bound complex that couples electron transfer with translocation of ions across the membrane. The chain is Ion-translocating oxidoreductase complex subunit E from Buchnera aphidicola subsp. Acyrthosiphon pisum (strain 5A).